Consider the following 60-residue polypeptide: UPF0291 protein Nther_1806 (60 aa).

It belongs to the UPF0291 family.

It is found in the cytoplasm. The protein is UPF0291 protein Nther_1806 of Natranaerobius thermophilus (strain ATCC BAA-1301 / DSM 18059 / JW/NM-WN-LF).